The primary structure comprises 207 residues: RNA chaperone ProQ (207 aa).

The interval 100-156 is disordered; that stretch reads TLAESKAKVQARRKEQAQKARDEEKSKPKTKKAPQQRRANKPQAQKPAKQPVETRAL. The span at 111–126 shows a compositional bias: basic and acidic residues; sequence RRKEQAQKARDEEKSK. Positions 127–139 are enriched in basic residues; sequence PKTKKAPQQRRAN.

This sequence belongs to the ProQ family.

The protein localises to the cytoplasm. Functionally, RNA chaperone with significant RNA binding, RNA strand exchange and RNA duplexing activities. The sequence is that of RNA chaperone ProQ from Vibrio vulnificus (strain CMCP6).